Consider the following 148-residue polypeptide: Nucleoside diphosphate kinase B (148 aa).

ATP-binding residues include lysine 9, phenylalanine 57, arginine 85, threonine 91, arginine 102, and asparagine 112. Histidine 115 (pros-phosphohistidine intermediate) is an active-site residue.

It belongs to the NDK family. It depends on Mg(2+) as a cofactor.

It carries out the reaction a 2'-deoxyribonucleoside 5'-diphosphate + ATP = a 2'-deoxyribonucleoside 5'-triphosphate + ADP. It catalyses the reaction a ribonucleoside 5'-diphosphate + ATP = a ribonucleoside 5'-triphosphate + ADP. In terms of biological role, major role in the synthesis of nucleoside triphosphates other than ATP. The ATP gamma phosphate is transferred to the NDP beta phosphate via a ping-pong mechanism, using a phosphorylated active-site intermediate. This Flaveria bidentis (Coastal plain yellowtops) protein is Nucleoside diphosphate kinase B.